The following is a 207-amino-acid chain: Segregation and condensation protein B (207 aa).

It belongs to the ScpB family. In terms of assembly, homodimer. Homodimerization may be required to stabilize the binding of ScpA to the Smc head domains. Component of a cohesin-like complex composed of ScpA, ScpB and the Smc homodimer, in which ScpA and ScpB bind to the head domain of Smc. The presence of the three proteins is required for the association of the complex with DNA.

It is found in the cytoplasm. Its function is as follows. Participates in chromosomal partition during cell division. May act via the formation of a condensin-like complex containing Smc and ScpA that pull DNA away from mid-cell into both cell halves. This is Segregation and condensation protein B from Mycoplasmopsis pulmonis (strain UAB CTIP) (Mycoplasma pulmonis).